The primary structure comprises 369 residues: Tyrosinase-like protein orsC (369 aa).

The first 23 residues, 1–23 (MLAFNPLVTALAALIFLFCQANA), serve as a signal peptide directing secretion. Residues His112 and His121 each contribute to the Cu cation site. Residues Asn165, Asn179, Asn253, and Asn272 are each glycosylated (N-linked (GlcNAc...) asparagine). Residue His315 coordinates Cu cation.

The protein operates within secondary metabolite biosynthesis. Tyrosinase-like protein; part of the gene cluster that mediates the biosynthesis of orsellinic acid, as well as of the cathepsin K inhibitors F9775 A and F9775 B. The non-reducing polyketide synthase orsA produces orsellinic acid by condensing acetyl-CoA with 3 malonyl-CoA units. Further modifications by the decarboxylase orsB and the tyrosinase-like protein orsC lead to the production of F9775 A and F9775 B. The functions of orsD and orsE remain unclear since only orsB and orsC are required to convert orsellinic acid into F9775 A and F9775 B. This chain is Tyrosinase-like protein orsC, found in Emericella nidulans (strain FGSC A4 / ATCC 38163 / CBS 112.46 / NRRL 194 / M139) (Aspergillus nidulans).